Consider the following 225-residue polypeptide: DNA-binding response regulator MtrA (225 aa).

The Response regulatory domain occupies 4–117; sequence RILVVDDDAS…ELVARVRARL (114 aa). Asp53 is subject to 4-aspartylphosphate. Positions 125-224 form a DNA-binding region, ompR/PhoB-type; the sequence is AEMLSIADVD…VRGVGYKAGP (100 aa).

Post-translationally, phosphorylated by MtrB.

In terms of biological role, member of the two-component regulatory system MtrA/MtrB. This is DNA-binding response regulator MtrA (mtrA) from Mycobacterium leprae (strain TN).